We begin with the raw amino-acid sequence, 208 residues long: Peptide deformylase 3 (208 aa).

Fe cation is bound by residues cysteine 120 and histidine 162. The active site involves glutamate 163. Residue histidine 166 participates in Fe cation binding.

This sequence belongs to the polypeptide deformylase family. Fe(2+) is required as a cofactor.

It carries out the reaction N-terminal N-formyl-L-methionyl-[peptide] + H2O = N-terminal L-methionyl-[peptide] + formate. Removes the formyl group from the N-terminal Met of newly synthesized proteins. Requires at least a dipeptide for an efficient rate of reaction. N-terminal L-methionine is a prerequisite for activity but the enzyme has broad specificity at other positions. The sequence is that of Peptide deformylase 3 from Streptomyces coelicolor (strain ATCC BAA-471 / A3(2) / M145).